We begin with the raw amino-acid sequence, 355 residues long: Ribosomal RNA large subunit methyltransferase M (355 aa).

S-adenosyl-L-methionine-binding positions include Ser183, 216-219, Asp235, Asp255, and Asp271; that span reads SPGG. Residue Lys300 is the Proton acceptor of the active site.

The protein belongs to the class I-like SAM-binding methyltransferase superfamily. RNA methyltransferase RlmE family. RlmM subfamily. As to quaternary structure, monomer.

The protein localises to the cytoplasm. The catalysed reaction is cytidine(2498) in 23S rRNA + S-adenosyl-L-methionine = 2'-O-methylcytidine(2498) in 23S rRNA + S-adenosyl-L-homocysteine + H(+). Its function is as follows. Catalyzes the 2'-O-methylation at nucleotide C2498 in 23S rRNA. The sequence is that of Ribosomal RNA large subunit methyltransferase M from Pseudomonas putida (strain W619).